The chain runs to 399 residues: S-adenosylmethionine synthase (399 aa).

An ATP-binding site is contributed by His-16. Asp-18 contacts Mg(2+). Glu-44 is a binding site for K(+). 2 residues coordinate L-methionine: Glu-57 and Gln-100. Positions 100–110 are flexible loop; the sequence is QSSDIAQGVNE. ATP is bound by residues 177–179, 244–245, Asp-253, 259–260, Ala-276, and Lys-280; these read DAK, RF, and RK. Asp-253 contributes to the L-methionine binding site. An L-methionine-binding site is contributed by Lys-284.

This sequence belongs to the AdoMet synthase family. As to quaternary structure, homotetramer; dimer of dimers. The cofactor is Mg(2+). It depends on K(+) as a cofactor.

The protein localises to the cytoplasm. It catalyses the reaction L-methionine + ATP + H2O = S-adenosyl-L-methionine + phosphate + diphosphate. It functions in the pathway amino-acid biosynthesis; S-adenosyl-L-methionine biosynthesis; S-adenosyl-L-methionine from L-methionine: step 1/1. Its function is as follows. Catalyzes the formation of S-adenosylmethionine (AdoMet) from methionine and ATP. The overall synthetic reaction is composed of two sequential steps, AdoMet formation and the subsequent tripolyphosphate hydrolysis which occurs prior to release of AdoMet from the enzyme. The polypeptide is S-adenosylmethionine synthase (Lactococcus lactis subsp. cremoris (strain MG1363)).